Consider the following 560-residue polypeptide: Membrane protein insertase YidC (560 aa).

Transmembrane regions (helical) follow at residues isoleucine 5–phenylalanine 25, alanine 334–phenylalanine 354, tyrosine 357–phenylalanine 377, leucine 431–isoleucine 451, leucine 476–leucine 496, and phenylalanine 522–tryptophan 542.

This sequence belongs to the OXA1/ALB3/YidC family. Type 1 subfamily. Interacts with the Sec translocase complex via SecD. Specifically interacts with transmembrane segments of nascent integral membrane proteins during membrane integration.

The protein localises to the cell inner membrane. Its function is as follows. Required for the insertion and/or proper folding and/or complex formation of integral membrane proteins into the membrane. Involved in integration of membrane proteins that insert both dependently and independently of the Sec translocase complex, as well as at least some lipoproteins. Aids folding of multispanning membrane proteins. The polypeptide is Membrane protein insertase YidC (Rickettsia massiliae (strain Mtu5)).